Consider the following 261-residue polypeptide: MDGKLRADEVAVTKSILKSTFNMWMDVIDVDVVIVGAGPSGLTAAKYLAQKGVKTVVLERHLSFGGGTWGGGMGFPNIVVEKPADEILREAGIKLDEVDGEDELFTADSVEVPAKLGVAAIDAGAKILTGIVVEDLILKEDKIAGVVIQSYAIEKAGLHIDPLTISAKYVIDSTGHDASAVHTLARKNKDLGIEVPGEKSMWAEKGENSLTRNTREIFPGLYVCGMAANAYHAGYRMGAIFGGMYLSGKKCAEMILEKMEK.

NAD(+)-binding positions include serine 40, 59 to 60 (ER), glycine 67, valine 133, and 159 to 161 (HID). Residues aspartate 161 and histidine 176 each coordinate Fe cation. Residues serine 179 and methionine 226 each contribute to the NAD(+) site. Position 236 (arginine 236) interacts with glycine.

Belongs to the THI4 family. As to quaternary structure, homooctamer; tetramer of dimers. Fe(2+) serves as cofactor.

The enzyme catalyses hydrogen sulfide + glycine + NAD(+) = ADP-5-ethyl-4-methylthiazole-2-carboxylate + nicotinamide + 3 H2O + H(+). It functions in the pathway cofactor biosynthesis; thiamine diphosphate biosynthesis. Involved in the biosynthesis of the thiazole moiety of thiamine. Catalyzes the conversion of NAD and glycine to adenosine diphosphate 5-(2-hydroxyethyl)-4-methylthiazole-2-carboxylate (ADT), an adenylated thiazole intermediate, using free sulfide as a source of sulfur. This Methanococcus maripaludis (strain C5 / ATCC BAA-1333) protein is Thiamine thiazole synthase.